A 526-amino-acid polypeptide reads, in one-letter code: Probable feruloyl esterase B-1 (526 aa).

The N-terminal stretch at 1 to 19 (MPSLRRLLPFLAAGSAALA) is a signal peptide. 2 disulfides stabilise this stretch: cysteine 28–cysteine 75 and cysteine 63–cysteine 114. N-linked (GlcNAc...) asparagine glycans are attached at residues asparagine 53, asparagine 85, asparagine 98, and asparagine 138. 3 disulfide bridges follow: cysteine 187/cysteine 441, cysteine 256/cysteine 273, and cysteine 282/cysteine 291. The active-site Acyl-ester intermediate is serine 188. Residue asparagine 246 is glycosylated (N-linked (GlcNAc...) asparagine). Residues aspartate 257, aspartate 260, alanine 262, aspartate 264, and isoleucine 266 each coordinate Ca(2+). 2 N-linked (GlcNAc...) asparagine glycosylation sites follow: asparagine 287 and asparagine 311. Active-site charge relay system residues include aspartate 400 and histidine 440. 2 N-linked (GlcNAc...) asparagine glycosylation sites follow: asparagine 490 and asparagine 516. A disulfide bridge links cysteine 503 with cysteine 525.

The protein belongs to the tannase family.

The protein resides in the secreted. It catalyses the reaction feruloyl-polysaccharide + H2O = ferulate + polysaccharide.. Its function is as follows. Involved in degradation of plant cell walls. Hydrolyzes the feruloyl-arabinose ester bond in arabinoxylans as well as the feruloyl-galactose and feruloyl-arabinose ester bonds in pectin. In Aspergillus flavus (strain ATCC 200026 / FGSC A1120 / IAM 13836 / NRRL 3357 / JCM 12722 / SRRC 167), this protein is Probable feruloyl esterase B-1 (faeB-1).